The following is a 189-amino-acid chain: dTTP/UTP pyrophosphatase (189 aa).

Aspartate 73 acts as the Proton acceptor in catalysis.

The protein belongs to the Maf family. YhdE subfamily. The cofactor is a divalent metal cation.

It is found in the cytoplasm. It catalyses the reaction dTTP + H2O = dTMP + diphosphate + H(+). The enzyme catalyses UTP + H2O = UMP + diphosphate + H(+). Nucleoside triphosphate pyrophosphatase that hydrolyzes dTTP and UTP. May have a dual role in cell division arrest and in preventing the incorporation of modified nucleotides into cellular nucleic acids. In Vibrio parahaemolyticus serotype O3:K6 (strain RIMD 2210633), this protein is dTTP/UTP pyrophosphatase.